Here is a 329-residue protein sequence, read N- to C-terminus: Putative methylthioribose-1-phosphate isomerase (329 aa).

Residues 50 to 52, arginine 84, and glutamine 182 each bind substrate; that span reads RGA. The active-site Proton donor is aspartate 223. Position 233-234 (233-234) interacts with substrate; the sequence is NK.

Belongs to the eIF-2B alpha/beta/delta subunits family. MtnA subfamily.

The catalysed reaction is 5-(methylsulfanyl)-alpha-D-ribose 1-phosphate = 5-(methylsulfanyl)-D-ribulose 1-phosphate. In terms of biological role, catalyzes the interconversion of methylthioribose-1-phosphate (MTR-1-P) into methylthioribulose-1-phosphate (MTRu-1-P). The sequence is that of Putative methylthioribose-1-phosphate isomerase from Methanocaldococcus jannaschii (strain ATCC 43067 / DSM 2661 / JAL-1 / JCM 10045 / NBRC 100440) (Methanococcus jannaschii).